A 309-amino-acid polypeptide reads, in one-letter code: Wall-associated proteinase (309 aa).

2 N-linked (GlcNAc...) asparagine glycosylation sites follow: Asn-190 and Asn-295.

Its subcellular location is the secreted. The protein localises to the cell wall. The protein resides in the membrane. May participate in wall plasticization and/or intussusception or in cell wall turnover. In Coccidioides immitis (strain RS) (Valley fever fungus), this protein is Wall-associated proteinase.